The sequence spans 114 residues: Large ribosomal subunit protein bL19 (114 aa).

This sequence belongs to the bacterial ribosomal protein bL19 family.

In terms of biological role, this protein is located at the 30S-50S ribosomal subunit interface and may play a role in the structure and function of the aminoacyl-tRNA binding site. The chain is Large ribosomal subunit protein bL19 from Halalkalibacterium halodurans (strain ATCC BAA-125 / DSM 18197 / FERM 7344 / JCM 9153 / C-125) (Bacillus halodurans).